Consider the following 187-residue polypeptide: UPF0301 protein Sputcn32_2681 (187 aa).

This sequence belongs to the UPF0301 (AlgH) family.

The chain is UPF0301 protein Sputcn32_2681 from Shewanella putrefaciens (strain CN-32 / ATCC BAA-453).